A 274-amino-acid chain; its full sequence is Cytochrome c oxidase subunit 3 (274 aa).

Topologically, residues 2–15 are cytoplasmic; that stretch reads AHVKNHDYQILPPS. Residues 16-36 traverse the membrane as a helical segment; that stretch reads IWPFFGAIGAFVMLTGAVAWM. Over 37 to 48 the chain is Periplasmic; that stretch reads KGITFFGLPVEG. A helical transmembrane segment spans residues 49–77; that stretch reads PWMFLIGLVGVLYVMFGWWADVVNEGETG. Residues 78–79 are Cytoplasmic-facing; that stretch reads EH. A helical transmembrane segment spans residues 80-115; sequence TPVVRIGLQYGFILFIMSEVMFFVAWFWAFIKNALY. The Periplasmic portion of the chain corresponds to 116 to 139; sequence PMGPDSPIKDGVWPPEGIVTFDPW. A helical membrane pass occupies residues 140–166; the sequence is HLPLINTLILLLSGVAVTWAHHAFVLE. The Cytoplasmic segment spans residues 167–168; it reads GD. The helical transmembrane segment at 169 to 197 threads the bilayer; that stretch reads RKTTINGLIVAVILGVCFTGLQAYEYSHA. The Periplasmic segment spans residues 198–203; that stretch reads AFGLAD. Residues 204-237 traverse the membrane as a helical segment; it reads TVYAGAFYMATGFHGAHVIIGTIFLFVCLIRLLK. Residues 238-244 lie on the Cytoplasmic side of the membrane; that stretch reads GQMTQKQ. The helical transmembrane segment at 245–274 threads the bilayer; that stretch reads HVGFEAAAWYWHFVDVVWLFLFVVIYIWGR.

Belongs to the cytochrome c oxidase subunit 3 family.

The protein localises to the cell inner membrane. The catalysed reaction is 4 Fe(II)-[cytochrome c] + O2 + 8 H(+)(in) = 4 Fe(III)-[cytochrome c] + 2 H2O + 4 H(+)(out). This Paracoccus denitrificans protein is Cytochrome c oxidase subunit 3 (ctaE).